We begin with the raw amino-acid sequence, 259 residues long: uncharacterized protein (259 aa).

3 helical membrane passes run 55–75 (ILIL…SYLI), 85–105 (FPSI…FFSS), and 127–147 (FFFA…LCCG).

The protein localises to the membrane. This is an uncharacterized protein from Arabidopsis thaliana (Mouse-ear cress).